Reading from the N-terminus, the 89-residue chain is Acyl carrier protein MbtL (89 aa).

The region spanning 7-82 (ESVSAALTEI…DLEAAIQAKV (76 aa)) is the Carrier domain. Serine 42 is modified (O-(pantetheine 4'-phosphoryl)serine).

Post-translationally, 4'-phosphopantetheine is transferred from CoA to a specific serine of apo-ACP, leading to the activated holo-ACP form.

The protein resides in the cytoplasm. It participates in siderophore biosynthesis; mycobactin biosynthesis. Acyl carrier protein involved in the formation of acyl-S-ACP intermediates within the mycobactin biosynthesis process. This chain is Acyl carrier protein MbtL (mbtL), found in Mycobacterium sp. (strain MCS).